A 549-amino-acid chain; its full sequence is Probable protein kinase UbiB (549 aa).

Positions 123 to 501 constitute a Protein kinase domain; the sequence is DFNETPLASA…QQQAHKSNYL (379 aa). ATP is bound by residues 129-137 and lysine 152; that span reads LASASISQV. Aspartate 287 functions as the Proton acceptor in the catalytic mechanism. 2 helical membrane passes run 498 to 518 and 520 to 540; these read SNYL…LFNQ and ATLW…IIGW.

This sequence belongs to the ABC1 family. UbiB subfamily.

The protein resides in the cell inner membrane. The protein operates within cofactor biosynthesis; ubiquinone biosynthesis [regulation]. In terms of biological role, is probably a protein kinase regulator of UbiI activity which is involved in aerobic coenzyme Q (ubiquinone) biosynthesis. In Shewanella sp. (strain MR-4), this protein is Probable protein kinase UbiB.